We begin with the raw amino-acid sequence, 260 residues long: Carbonic anhydrase 3 (260 aa).

Ala-2 is subject to N-acetylalanine. Residues 3-259 enclose the Alpha-carbonic anhydrase domain; sequence KEWGYADHNG…IKGRIVKASF (257 aa). Phosphoserine occurs at positions 29, 43, 50, and 55. Positions 64–67 are involved in proton transfer; sequence KTCR. Thr-73 is modified (phosphothreonine). Residues His-94, His-96, and His-119 each coordinate Zn(2+). A Phosphotyrosine modification is found at Tyr-127. S-glutathionyl cysteine occurs at positions 182 and 187. Residue 198–199 coordinates substrate; the sequence is TT. The residue at position 216 (Thr-216) is a Phosphothreonine. Ser-219 is subject to Phosphoserine.

This sequence belongs to the alpha-carbonic anhydrase family. Zn(2+) is required as a cofactor. S-thiolated both by thiol-disulfide exchange with glutathione disulfide and by oxyradical-initiated S-thiolation with reduced glutathione. In terms of processing, S-glutathionylated in hepatocytes under oxidative stress.

It localises to the cytoplasm. It carries out the reaction hydrogencarbonate + H(+) = CO2 + H2O. Its activity is regulated as follows. Inhibited by acetazolamide. Functionally, reversible hydration of carbon dioxide. The sequence is that of Carbonic anhydrase 3 (CA3) from Bos taurus (Bovine).